A 648-amino-acid polypeptide reads, in one-letter code: Serine/threonine-protein kinase plk-1 (648 aa).

Residues 1 to 24 (MNRLPNIAKPPQKSNQRKEKAPPE) form a disordered region. Residues 38–289 (YEKGRFLGKG…AKQVQRDGFF (252 aa)) form the Protein kinase domain. ATP-binding positions include 44-52 (LGKGGFAHC) and Lys-67. Asp-161 acts as the Proton acceptor in catalysis. 2 consecutive POLO box domains span residues 412-492 (WISK…YMND) and 514-596 (TLRV…RLMS). Over residues 612–629 (PRSMAAARSASAGSRGPN) the composition is skewed to low complexity.

It belongs to the protein kinase superfamily. Ser/Thr protein kinase family. CDC5/Polo subfamily. Interacts with mex-5, mex-6 and spat-1. Embryos.

It is found in the cytoplasm. The protein localises to the cytoskeleton. Its subcellular location is the microtubule organizing center. The protein resides in the centrosome. It localises to the midbody. It is found in the nucleus. The protein localises to the chromosome. Its subcellular location is the centromere. The protein resides in the kinetochore. The enzyme catalyses L-seryl-[protein] + ATP = O-phospho-L-seryl-[protein] + ADP + H(+). The catalysed reaction is L-threonyl-[protein] + ATP = O-phospho-L-threonyl-[protein] + ADP + H(+). Its function is as follows. Required for oocyte nuclear envelope breakdown before entry of oocyte into spermatheca. In meiotic cells, required for spindle dynamics and probably for spindle attachment to the chromosomes. Zygotic role in the development of the germline and nerve cord. In mitotic cells, plays a role in spindle organization and centrosome maturation. Involved in asymmetric nuclear localization of cdc-25.1 during embryogenesis which affects cell division timing. Together with plk-2, regulates cytoplasm polarity in early embryos. May play a minor role in chromosome pairing and synapsis during oocyte meiosis I. This Caenorhabditis elegans protein is Serine/threonine-protein kinase plk-1 (plk-1).